The primary structure comprises 470 residues: Asparagine--tRNA ligase (470 aa).

This sequence belongs to the class-II aminoacyl-tRNA synthetase family. Homodimer.

Its subcellular location is the cytoplasm. It catalyses the reaction tRNA(Asn) + L-asparagine + ATP = L-asparaginyl-tRNA(Asn) + AMP + diphosphate + H(+). This Blochmanniella pennsylvanica (strain BPEN) protein is Asparagine--tRNA ligase.